A 187-amino-acid chain; its full sequence is dCTP deaminase, dUMP-forming (187 aa).

Residues 101–106 (KSSLGR) and Asp119 each bind dCTP. The Proton donor/acceptor role is filled by Glu129. Residues Gln148, Tyr162, and Gln174 each contribute to the dCTP site.

It belongs to the dCTP deaminase family. As to quaternary structure, homotrimer.

It catalyses the reaction dCTP + 2 H2O = dUMP + NH4(+) + diphosphate. It functions in the pathway pyrimidine metabolism; dUMP biosynthesis; dUMP from dCTP: step 1/1. Its function is as follows. Bifunctional enzyme that catalyzes both the deamination of dCTP to dUTP and the hydrolysis of dUTP to dUMP without releasing the toxic dUTP intermediate. The polypeptide is dCTP deaminase, dUMP-forming (Corynebacterium kroppenstedtii (strain DSM 44385 / JCM 11950 / CIP 105744 / CCUG 35717)).